The chain runs to 196 residues: DnaA initiator-associating protein DiaA (196 aa).

The SIS domain maps to 34 to 196 (LVQSLLNGNK…DNTLFPHQDD (163 aa)).

Belongs to the SIS family. DiaA subfamily. In terms of assembly, homotetramer; dimer of dimers.

Its function is as follows. Required for the timely initiation of chromosomal replication via direct interactions with the DnaA initiator protein. This Shigella boydii serotype 18 (strain CDC 3083-94 / BS512) protein is DnaA initiator-associating protein DiaA.